The chain runs to 128 residues: MSNNIPAELKYVASHEWLRLEEDGTITVGITHHAQELLGDIVFVELPEVGANLAAEEQAGVVESVKAASDVYAPIAGEVVAVNDDLPSAPETANSDPYGAGWFFKIKPANPADYDGLLTAEQYAGEVD.

Residues 25–107 (TITVGITHHA…YGAGWFFKIK (83 aa)) form the Lipoyl-binding domain. N6-lipoyllysine is present on K66.

This sequence belongs to the GcvH family. As to quaternary structure, the glycine cleavage system is composed of four proteins: P, T, L and H. (R)-lipoate is required as a cofactor.

In terms of biological role, the glycine cleavage system catalyzes the degradation of glycine. The H protein shuttles the methylamine group of glycine from the P protein to the T protein. This chain is Glycine cleavage system H protein, found in Neisseria meningitidis serogroup C (strain 053442).